The primary structure comprises 374 residues: Probable neutral protease 2 homolog TRV_05367 (374 aa).

The signal sequence occupies residues 1-19 (MQVIVALAALGSLAAPALG). Positions 20-189 (FSIPRGVPVS…RGPLTRINKR (170 aa)) are excised as a propeptide. 2 disulfides stabilise this stretch: Cys-197–Cys-267 and Cys-274–Cys-292. Residue His-317 participates in Zn(2+) binding. Glu-318 is an active-site residue. Residues His-321 and Asp-332 each coordinate Zn(2+).

This sequence belongs to the peptidase M35 family. Requires Zn(2+) as cofactor.

It is found in the secreted. It catalyses the reaction Preferential cleavage of bonds with hydrophobic residues in P1'. Also 3-Asn-|-Gln-4 and 8-Gly-|-Ser-9 bonds in insulin B chain.. Its function is as follows. Probable secreted metalloprotease that shows high activities on basic nuclear substrates such as histone and protamine. May be involved in virulence. This Trichophyton verrucosum (strain HKI 0517) protein is Probable neutral protease 2 homolog TRV_05367.